The primary structure comprises 495 residues: Serine/threonine protein phosphatase 2A 57 kDa regulatory subunit B' alpha isoform (495 aa).

The segment covering 1-13 (MFKKIMKGANRKA) has biased composition (basic residues). Disordered stretches follow at residues 1–61 (MFKK…AATT) and 462–495 (QAKSKQVEEQRQNRWRRLDEAVEEREREDPMITS). Residues 49 to 61 (VPSSPNSMAAATT) are compositionally biased toward polar residues.

It belongs to the phosphatase 2A regulatory subunit B56 family. PP2A consists of a common heteromeric enzyme, composed of a catalytic subunit (subunits C), a constant regulatory subunit (subunit A), and a variety of regulatory subunits such as subunits B (the R2/B/PR55/B55, R3/B''/PR72/PR130/PR59 and R5/B'/B56 families). Interacts with BZR1. Interacts with BRI1. Interacts with SRK2E/OST1. In terms of tissue distribution, expressed ubiquitously, higher levels in leaves.

The protein localises to the nucleus. It localises to the cytoplasm. The B regulatory subunit may modulate substrate selectivity and catalytic activity, and may also direct the localization of the catalytic enzyme to a particular subcellular compartment. Required for the formation of the PP2A holoenzyme that positively regulates brassinosteroid signaling by dephosphorylating and activating BZR1. This is Serine/threonine protein phosphatase 2A 57 kDa regulatory subunit B' alpha isoform (B'ALPHA) from Arabidopsis thaliana (Mouse-ear cress).